We begin with the raw amino-acid sequence, 171 residues long: Signal peptidase complex catalytic subunit SEC11 (171 aa).

At 1–6 (MNIRQQ) the chain is on the cytoplasmic side. The chain crosses the membrane as a helical; Signal-anchor for type II membrane protein span at residues 7–24 (LVQLLNLAMVLSTAFMFW). Residues 25–171 (KGLGLVTNSN…MALSTLLTRE (147 aa)) lie on the Lumenal side of the membrane. Active-site charge relay system residues include serine 44, histidine 83, and aspartate 113. A C-terminal short (CTS) helix region spans residues 157–168 (GLLGLMALSTLL).

This sequence belongs to the peptidase S26B family. Component of the signal peptidase complex (SPC) composed of a catalytic subunit SEC11 and three accessory subunits SPC1, SPC2 and SPC3. The complex induces a local thinning of the ER membrane which is used to measure the length of the signal peptide (SP) h-region of protein substrates. This ensures the selectivity of the complex towards h-regions shorter than 18-20 amino acids. SPC associates with the translocon complex.

The protein localises to the endoplasmic reticulum membrane. The enzyme catalyses Cleavage of hydrophobic, N-terminal signal or leader sequences from secreted and periplasmic proteins.. In terms of biological role, catalytic component of the signal peptidase complex (SPC) which catalyzes the cleavage of N-terminal signal sequences from nascent proteins as they are translocated into the lumen of the endoplasmic reticulum. Specifically cleaves N-terminal signal peptides that contain a hydrophobic alpha-helix (h-region) shorter than 18-20 amino acids. The chain is Signal peptidase complex catalytic subunit SEC11 (SEC11) from Komagataella phaffii (strain GS115 / ATCC 20864) (Yeast).